We begin with the raw amino-acid sequence, 115 residues long: MAEICCVKEIQEEDVEKIRLPTRPELDIPDSDHEDPTVNEEEGCKTPTSSDHKIPEVKYTLCPPAPRKPKPNRSSGTKRKLTPVNVVNRIPIDLSREIEMFFEDLDRRIKKSRKQ.

Residues 17–36 are compositionally biased toward basic and acidic residues; the sequence is KIRLPTRPELDIPDSDHEDP. The interval 17-82 is disordered; the sequence is KIRLPTRPEL…RSSGTKRKLT (66 aa). Over residues 67–81 the composition is skewed to basic residues; it reads RKPKPNRSSGTKRKL.

In terms of assembly, interacts with CDKA-1 and D-type cyclins. Expressed at low levels in roots and stems.

The protein localises to the nucleus. Functionally, probable cyclin-dependent protein kinase (CDK) inhibitor that functions as a repressor of mitosis in the endoreduplication cell cycle. In Arabidopsis thaliana (Mouse-ear cress), this protein is Cyclin-dependent protein kinase inhibitor SMR3.